The following is a 465-amino-acid chain: Fumarate hydratase class II (465 aa).

Residues 98–100 (SGT), arginine 126, 129–132 (HPND), 139–141 (SSN), and threonine 187 contribute to the substrate site. Histidine 188 functions as the Proton donor/acceptor in the catalytic mechanism. The active site involves serine 318. Residues serine 319 and 324–326 (KVN) contribute to the substrate site.

It belongs to the class-II fumarase/aspartase family. Fumarase subfamily. Homotetramer.

The protein localises to the cytoplasm. The catalysed reaction is (S)-malate = fumarate + H2O. Its pathway is carbohydrate metabolism; tricarboxylic acid cycle; (S)-malate from fumarate: step 1/1. In terms of biological role, involved in the TCA cycle. Catalyzes the stereospecific interconversion of fumarate to L-malate. This Yersinia pestis protein is Fumarate hydratase class II.